The following is a 329-amino-acid chain: MFSIGFIIIAVIIVVALLILFSFVPVGLWISALAAGVHVGIGTLVGMRLRRVSPRKVIAPLIKAHKAGLNLTTNQLESHYLAGGNVDRVVDANIAAQRADIDLPFERGAAIDLAGRDVLEAVQMSVNPKVIETPFIAGVAMNGIEVKAKARITVRANIARLVGGAGEETIIARVGEGIVSTIGSSEHHTEVLENPDNISKTVLSKGLDSGTAFEILSIDIADVDISKNIGADLQTEQALADKNIAQAKAEERRAMAVASEQEMKARVQEMRAKVVEAESEVPLAMAEALRSGNIGVKDYYNLKNIEADTGMRNAINKRTDQNDDESPQQ.

Transmembrane regions (helical) follow at residues 4–24 and 26–46; these read IGFI…FSFV and VGLW…TLVG.

It belongs to the flotillin-like FloA family. In terms of assembly, homooligomerizes.

The protein localises to the cell membrane. It is found in the membrane raft. Its function is as follows. Found in functional membrane microdomains (FMM) that may be equivalent to eukaryotic membrane rafts. FMMs are highly dynamic and increase in number as cells age. Flotillins are thought to be important factors in membrane fluidity. In Staphylococcus epidermidis (strain ATCC 35984 / DSM 28319 / BCRC 17069 / CCUG 31568 / BM 3577 / RP62A), this protein is Flotillin-like protein FloA.